Reading from the N-terminus, the 434-residue chain is Enolase (434 aa).

A (2R)-2-phosphoglycerate-binding site is contributed by Gln163. The Proton donor role is filled by Glu205. Mg(2+) is bound by residues Asp243, Glu291, and Asp318. 4 residues coordinate (2R)-2-phosphoglycerate: Lys343, Arg372, Ser373, and Lys394. Lys343 functions as the Proton acceptor in the catalytic mechanism.

This sequence belongs to the enolase family. The cofactor is Mg(2+).

The protein localises to the cytoplasm. It is found in the secreted. It localises to the cell surface. The enzyme catalyses (2R)-2-phosphoglycerate = phosphoenolpyruvate + H2O. The protein operates within carbohydrate degradation; glycolysis; pyruvate from D-glyceraldehyde 3-phosphate: step 4/5. Functionally, catalyzes the reversible conversion of 2-phosphoglycerate (2-PG) into phosphoenolpyruvate (PEP). It is essential for the degradation of carbohydrates via glycolysis. This is Enolase from Fusobacterium nucleatum subsp. nucleatum (strain ATCC 25586 / DSM 15643 / BCRC 10681 / CIP 101130 / JCM 8532 / KCTC 2640 / LMG 13131 / VPI 4355).